The primary structure comprises 212 residues: Cytochrome c biogenesis ATP-binding export protein CcmA (212 aa).

In terms of domain architecture, ABC transporter spans 7–209; the sequence is LSLQNLSCQR…HLQKLNLAAY (203 aa). Residue 39–46 coordinates ATP; that stretch reads GHNGIGKT.

The protein belongs to the ABC transporter superfamily. CcmA exporter (TC 3.A.1.107) family. The complex is composed of two ATP-binding proteins (CcmA) and two transmembrane proteins (CcmB).

The protein localises to the cell inner membrane. It carries out the reaction heme b(in) + ATP + H2O = heme b(out) + ADP + phosphate + H(+). Functionally, part of the ABC transporter complex CcmAB involved in the biogenesis of c-type cytochromes; once thought to export heme, this seems not to be the case, but its exact role is uncertain. Responsible for energy coupling to the transport system. The chain is Cytochrome c biogenesis ATP-binding export protein CcmA from Haemophilus influenzae (strain ATCC 51907 / DSM 11121 / KW20 / Rd).